We begin with the raw amino-acid sequence, 270 residues long: 3-phenylpropionate-dihydrodiol/cinnamic acid-dihydrodiol dehydrogenase (270 aa).

Position 10–34 (10–34) interacts with NAD(+); the sequence is FITGGGSGLGLALVERFIEEGAQVA. Residue Ser-143 participates in substrate binding. Residue Tyr-156 is the Proton acceptor of the active site.

The protein belongs to the short-chain dehydrogenases/reductases (SDR) family.

The catalysed reaction is 3-(cis-5,6-dihydroxycyclohexa-1,3-dien-1-yl)propanoate + NAD(+) = 3-(2,3-dihydroxyphenyl)propanoate + NADH + H(+). It carries out the reaction (2E)-3-(cis-5,6-dihydroxycyclohexa-1,3-dien-1-yl)prop-2-enoate + NAD(+) = (2E)-3-(2,3-dihydroxyphenyl)prop-2-enoate + NADH + H(+). It functions in the pathway aromatic compound metabolism; 3-phenylpropanoate degradation. Functionally, converts 3-phenylpropionate-dihydrodiol (PP-dihydrodiol) and cinnamic acid-dihydrodiol (CI-dihydrodiol) into 3-(2,3-dihydroxylphenyl)propanoic acid (DHPP) and 2,3-dihydroxicinnamic acid (DHCI), respectively. The sequence is that of 3-phenylpropionate-dihydrodiol/cinnamic acid-dihydrodiol dehydrogenase from Escherichia coli O157:H7.